We begin with the raw amino-acid sequence, 345 residues long: D-apiose dehydrogenase (345 aa).

15-16 (FF) lines the NAD(+) pocket. 4 residues coordinate Mg(2+): W24, K25, V27, and A30. NAD(+) is bound by residues D37, S79, 97 to 98 (QK), N126, and 165 to 167 (QPY). K98 is a substrate binding site. Residues Q165, D178, H182, and Y232 each coordinate substrate.

It belongs to the Gfo/Idh/MocA family.

The catalysed reaction is D-apiofuranose + NAD(+) = D-apionolactone + NADH + H(+). The protein operates within carbohydrate metabolism. Involved in catabolism of D-apiose. Catalyzes oxidation of D-apiose to D-apionolactone. In Rhizobium rhizogenes (strain K84 / ATCC BAA-868) (Agrobacterium radiobacter), this protein is D-apiose dehydrogenase.